A 376-amino-acid chain; its full sequence is Small ribosomal subunit protein uS11m (376 aa).

It belongs to the universal ribosomal protein uS11 family. As to quaternary structure, component of the mitochondrial small ribosomal subunit (mt-SSU). Mature N.crassa 74S mitochondrial ribosomes consist of a small (37S) and a large (54S) subunit. The 37S small subunit contains a 16S ribosomal RNA (16S mt-rRNA) and 32 different proteins. The 54S large subunit contains a 23S rRNA (23S mt-rRNA) and 42 different proteins.

The protein resides in the mitochondrion. Component of the mitochondrial ribosome (mitoribosome), a dedicated translation machinery responsible for the synthesis of mitochondrial genome-encoded proteins, including at least some of the essential transmembrane subunits of the mitochondrial respiratory chain. The mitoribosomes are attached to the mitochondrial inner membrane and translation products are cotranslationally integrated into the membrane. The protein is Small ribosomal subunit protein uS11m (mrps18) of Neurospora crassa (strain ATCC 24698 / 74-OR23-1A / CBS 708.71 / DSM 1257 / FGSC 987).